The following is a 132-amino-acid chain: Tumor suppressor ARF (132 aa).

The tract at residues 1–64 (MVRRFLVTLR…LGQQPLPRRP (64 aa)) is interaction with CDK5RAP3 and MDM2. Residues 56-132 (GQQPLPRRPG…CLGPSARGPG (77 aa)) form a disordered region. The span at 71-83 (RPSGGAAAAPRRG) shows a compositional bias: low complexity. The span at 84–99 (AQLRRPRHSHPTRARR) shows a compositional bias: basic residues. A compositionally biased stretch (gly residues) spans 103 to 117 (GLPGHAGGAAPGRGA).

As to quaternary structure, does not interact with cyclins, CDK1, CDK2, CDK4, CDK5 or CDK6. Binds to BCL6, E2F1, HUWE1, MDM2, MYC, NPM1/B23, TOP1/TOPOI and UBE2I/UBC9. Interacts with TBRG1 and COMMD1. Interacts with CDKN2AIP and E4F1. Interacts with CDK5RAP3 and MDM2; form a ternary complex involved in regulation of p53/TP53. Interacts with NOP53; the interaction is direct and promotes ARF nucleoplasmic relocalization and ubiquitin-mediated proteasomal degradation. Interacts with TTF1 (via the N-terminal region (NRD) and a C-terminal region); the interaction is direct and inhibits the nucleolar localization of TTF1. In terms of assembly, interacts with C1QBP. In terms of processing, ubiquitinated in normal cells by TRIP12 via the ubiquitin fusion degradation (UFD) pathway, a process that mediates ubiquitination at the N-terminus, regardless of the absence of lysine residues. Ubiquitination leads to its proteasomal degradation. In cancer cells, however, TRIP12 is located in a different cell compartment, preventing ubiquitination and degradation.

It is found in the nucleus. The protein resides in the nucleolus. It localises to the nucleoplasm. Its subcellular location is the mitochondrion. Functionally, capable of inducing cell cycle arrest in G1 and G2 phases. Acts as a tumor suppressor. Binds to MDM2 and blocks its nucleocytoplasmic shuttling by sequestering it in the nucleolus. This inhibits the oncogenic action of MDM2 by blocking MDM2-induced degradation of p53 and enhancing p53-dependent transactivation and apoptosis. Also induces G2 arrest and apoptosis in a p53-independent manner by preventing the activation of cyclin B1/CDC2 complexes. Binds to BCL6 and down-regulates BCL6-induced transcriptional repression. Binds to E2F1 and MYC and blocks their transcriptional activator activity but has no effect on MYC transcriptional repression. Binds to TOP1/TOPOI and stimulates its activity. This complex binds to rRNA gene promoters and may play a role in rRNA transcription and/or maturation. Interacts with NPM1/B23 and promotes its polyubiquitination and degradation, thus inhibiting rRNA processing. Plays a role in inhibiting ribosome biogenesis, perhaps by binding to the nucleolar localization sequence of transcription termination factor TTF1, and thereby preventing nucleolar localization of TTF1. Interacts with COMMD1 and promotes its 'Lys63'-linked polyubiquitination. Interacts with UBE2I/UBC9 and enhances sumoylation of a number of its binding partners including MDM2 and E2F1. Binds to HUWE1 and represses its ubiquitin ligase activity. May play a role in controlling cell proliferation and apoptosis during mammary gland development. In terms of biological role, may be involved in regulation of autophagy and caspase-independent cell death; the short-lived mitochondrial isoform is stabilized by C1QBP. The chain is Tumor suppressor ARF from Homo sapiens (Human).